Here is a 185-residue protein sequence, read N- to C-terminus: Ribulose bisphosphate carboxylase small subunit, chloroplastic 2 (185 aa).

The transit peptide at 1–45 (MAAVIAKSSVSAAVARPARSSVRPMAALKPAVKAAPVAAPAQANQ) directs the protein to the chloroplast. M46 is modified (N-methylmethionine).

It belongs to the RuBisCO small chain family. In terms of assembly, heterohexadecamer of 8 large and 8 small subunits.

It is found in the plastid. Its subcellular location is the chloroplast. It localises to the chloroplast stroma. In terms of biological role, ruBisCO catalyzes two reactions: the carboxylation of D-ribulose 1,5-bisphosphate, the primary event in carbon dioxide fixation, as well as the oxidative fragmentation of the pentose substrate. Both reactions occur simultaneously and in competition at the same active site. Although the small subunit is not catalytic it is essential for maximal activity. This Chlamydomonas reinhardtii (Chlamydomonas smithii) protein is Ribulose bisphosphate carboxylase small subunit, chloroplastic 2.